Consider the following 260-residue polypeptide: MNLYEFTFIAQQGLLQQEVEGMAQELGVSLKNIKADIMFQQIKGILEKGSDKFTKRDSEMHAKDIQENLIAYSSFLESFAKILWIELEEDLSNLKEVKLKISKELKDDLKGLGIAQGFIKLPEGGKQIAKNAFIHNAVSALKEDISKHLIKIFQGILQNFGMAEPNQSNKTLEMLLDNIEASGLIKYEYWGLLDFAYPINKMKSGHYCIMCISSTSNIMDEFVRRIKLNENIIRHLSVHVDKFFEGKSHMMNKQVEEQSA.

This sequence belongs to the bacterial ribosomal protein bS6 family.

Binds together with bS18 to 16S ribosomal RNA. The sequence is that of Small ribosomal subunit protein bS6 from Wolbachia sp. subsp. Brugia malayi (strain TRS).